Consider the following 401-residue polypeptide: Enolase (401 aa).

Gln-154 is a binding site for (2R)-2-phosphoglycerate. Glu-196 functions as the Proton donor in the catalytic mechanism. Residues Asp-232, Glu-275, and Asp-302 each coordinate Mg(2+). Lys-327, Arg-356, Ser-357, and Lys-378 together coordinate (2R)-2-phosphoglycerate. The Proton acceptor role is filled by Lys-327.

This sequence belongs to the enolase family. Mg(2+) is required as a cofactor.

The protein resides in the cytoplasm. It localises to the secreted. The protein localises to the cell surface. The catalysed reaction is (2R)-2-phosphoglycerate = phosphoenolpyruvate + H2O. Its pathway is carbohydrate degradation; glycolysis; pyruvate from D-glyceraldehyde 3-phosphate: step 4/5. Catalyzes the reversible conversion of 2-phosphoglycerate (2-PG) into phosphoenolpyruvate (PEP). It is essential for the degradation of carbohydrates via glycolysis. The chain is Enolase from Haloquadratum walsbyi (strain DSM 16790 / HBSQ001).